The following is a 254-amino-acid chain: Dihydroorotate dehydrogenase B (NAD(+)), electron transfer subunit (254 aa).

Positions 1–99 constitute an FAD-binding FR-type domain; sequence MLQTEMKVIQ…LGPLGKGFDI (99 aa). Residues 50-53, 67-69, and 74-75 contribute to the FAD site; these read RPIS, LYR, and GT. [2Fe-2S] cluster is bound by residues cysteine 218, cysteine 223, cysteine 226, and cysteine 241.

The protein belongs to the PyrK family. In terms of assembly, heterotetramer of 2 PyrK and 2 PyrD type B subunits. Requires [2Fe-2S] cluster as cofactor. It depends on FAD as a cofactor.

It participates in pyrimidine metabolism; UMP biosynthesis via de novo pathway; orotate from (S)-dihydroorotate (NAD(+) route): step 1/1. Functionally, responsible for channeling the electrons from the oxidation of dihydroorotate from the FMN redox center in the PyrD type B subunit to the ultimate electron acceptor NAD(+). The sequence is that of Dihydroorotate dehydrogenase B (NAD(+)), electron transfer subunit from Listeria monocytogenes serovar 1/2a (strain ATCC BAA-679 / EGD-e).